The following is an 884-amino-acid chain: E3 ubiquitin-protein ligase BRE1-like 1 (884 aa).

The disordered stretch occupies residues Met-1–Ser-37. Positions Tyr-49–Leu-86 form a coiled coil. The segment at Lys-107–Thr-127 is disordered. Residues Ser-108–Asn-121 are compositionally biased toward low complexity. Coiled-coil stretches lie at residues Leu-216 to Leu-541, Ser-580 to Ile-663, Arg-696 to Asp-762, and Lys-789 to Arg-827. An RING-type zinc finger spans residues Cys-832–Ser-871.

The protein belongs to the BRE1 family. In terms of assembly, interacts with SKIPA. Interacts with HUB2.

The protein localises to the nucleus. The catalysed reaction is S-ubiquitinyl-[E2 ubiquitin-conjugating enzyme]-L-cysteine + [acceptor protein]-L-lysine = [E2 ubiquitin-conjugating enzyme]-L-cysteine + N(6)-ubiquitinyl-[acceptor protein]-L-lysine.. The protein operates within protein modification; protein ubiquitination. Functionally, E3 ubiquitin-protein ligase that monoubiquitinates H2B to form H2BK143ub1. H2BK143ub1 gives a specific tag for epigenetic transcriptional activation and is a prerequisite for H3 Lys-4 methylation (H3K4me). It thereby plays a central role in histone code and gene regulation. H2B monoubiquitination (H2BK143ub1), mediated by HUB1, modulates transcriptional regulation of anther development, likely by promoting histone H3K4 dimethylation (H3K4me2) in the chromatin of the key tapetum degradation-related genes C4, CP1 and UDT1. The sequence is that of E3 ubiquitin-protein ligase BRE1-like 1 from Oryza sativa subsp. japonica (Rice).